The primary structure comprises 189 residues: DFLFARTMIGVFKNIEIMCNKGSSQTWGKEAWKKIVVCIVSDRRAKINPRTRAVLAGLGVYQDGIAKQQVNGKDVTAHIYEYTTQVGIDLKGTQVSLRPKGATPVQLLFCLKEKIRRKINSHRWFFQAFGRVLDPNICVLIDAGTKPGKDSIYHLWKAFDLEPMIGGACGEIKVMLEHGKKLYNPLVAT.

The protein belongs to the chitin synthase family.

Its subcellular location is the cell membrane. It catalyses the reaction [(1-&gt;4)-N-acetyl-beta-D-glucosaminyl](n) + UDP-N-acetyl-alpha-D-glucosamine = [(1-&gt;4)-N-acetyl-beta-D-glucosaminyl](n+1) + UDP + H(+). Its function is as follows. Polymerizes chitin, a structural polymer of the cell wall and septum, by transferring the sugar moiety of UDP-GlcNAc to the non-reducing end of the growing chitin polymer. The chain is Chitin synthase 1 (CHS1) from Xylohypha bantiana.